A 756-amino-acid chain; its full sequence is Cholesterol uptake protein 1 (756 aa).

The signal sequence occupies residues 1–18 (MRTSQAIFILIFLDSVRN). Topologically, residues 19 to 268 (QSPQVIPAKW…TIESSMKIFD (250 aa)) are extracellular. N-linked (GlcNAc...) asparagine glycosylation is found at Asn39 and Asn63. A Cholesterol-binding sequence motif motif is present at residues 124–129 (VHYNFR). N-linked (GlcNAc...) asparagine glycans are attached at residues Asn140, Asn174, and Asn257. A helical membrane pass occupies residues 269–289 (YTIPIVFWACILLLVTIVVFV). The Cytoplasmic segment spans residues 290 to 373 (YHYFDGIWER…YEERELKYDV (84 aa)). Residues 374–394 (YKIALAIIGIFYNITVLQLII) form a helical membrane-spanning segment. Residues 395 to 421 (SKAGSLRQSGDLDECTFNFQCARPLWY) are Extracellular-facing. A helical membrane pass occupies residues 422–442 (FVAFNNVVSNGGYVYFGTLII). Topologically, residues 443 to 473 (VMNYCRERSFRRLFAVQPTLAERYGLPQHSG) are cytoplasmic. The chain crosses the membrane as a helical span at residues 474–494 (LMTAIGLAVIMEGISSATYHV). The Extracellular segment spans residues 495 to 498 (CPNN). The helical transmembrane segment at 499 to 517 (INYQFDTALMYVIGMLGKL) threads the bilayer. Over 518 to 530 (KIWSLRHPDMVVS) the chain is Cytoplasmic. The chain crosses the membrane as a helical span at residues 531 to 551 (AYHAFGFLGVFLMAAIAGVYV). Residues 552–554 (HNM) are Extracellular-facing. Residues 555-575 (IFWALFSIIYIASMLLVSLEF) form a helical membrane-spanning segment. Residues 570-578 (LVSLEFYFK) carry the Cholesterol-binding sequence motif motif. Residues 576 to 612 (YFKGIWTLNLRELRNSIRLSWVSSRHLSCVVPAYKAR) lie on the Cytoplasmic side of the membrane. Residues 613-633 (FFVILLLNIANTAVVVYGLEA) form a helical membrane-spanning segment. Over 634-637 (HPKD) the chain is Extracellular. The helical transmembrane segment at 638–658 (FLSFLLIPFIGNLFIYIIYYI) threads the bilayer. The Cytoplasmic segment spans residues 659-671 (LMKMIYREKIPKR). A helical transmembrane segment spans residues 672–692 (AIALLFAAVISWTCAGILFNQ). Residues 693–728 (RVSDWSKMPAISRELNKPCIFLNFYDNHDLWHLSSA) lie on the Extracellular side of the membrane. Residues 729–749 (FAIFFSFTAINVIDDDLMFVM) form a helical membrane-spanning segment. At 750–756 (RNTIRVF) the chain is on the cytoplasmic side.

This sequence belongs to the SID1 family. As to expression, highly expressed along the intestine with expression also detected in the pharynx, especially at the terminal bulb, and in the excretory gland cells.

It localises to the cell membrane. It catalyses the reaction cholesterol(in) = cholesterol(out). Functionally, cholesterol-binding protein which is involved in dietary cholesterol uptake from the environment. Does not play a role in double-stranded RNA transport in contrast to other SID1 family members. This is Cholesterol uptake protein 1 from Caenorhabditis elegans.